Reading from the N-terminus, the 177-residue chain is ATP synthase subunit delta (177 aa).

This sequence belongs to the ATPase delta chain family. F-type ATPases have 2 components, F(1) - the catalytic core - and F(0) - the membrane proton channel. F(1) has five subunits: alpha(3), beta(3), gamma(1), delta(1), epsilon(1). F(0) has three main subunits: a(1), b(2) and c(10-14). The alpha and beta chains form an alternating ring which encloses part of the gamma chain. F(1) is attached to F(0) by a central stalk formed by the gamma and epsilon chains, while a peripheral stalk is formed by the delta and b chains.

It localises to the cell inner membrane. Functionally, f(1)F(0) ATP synthase produces ATP from ADP in the presence of a proton or sodium gradient. F-type ATPases consist of two structural domains, F(1) containing the extramembraneous catalytic core and F(0) containing the membrane proton channel, linked together by a central stalk and a peripheral stalk. During catalysis, ATP synthesis in the catalytic domain of F(1) is coupled via a rotary mechanism of the central stalk subunits to proton translocation. In terms of biological role, this protein is part of the stalk that links CF(0) to CF(1). It either transmits conformational changes from CF(0) to CF(1) or is implicated in proton conduction. The sequence is that of ATP synthase subunit delta from Sulfurimonas denitrificans (strain ATCC 33889 / DSM 1251) (Thiomicrospira denitrificans (strain ATCC 33889 / DSM 1251)).